The following is a 147-amino-acid chain: Ribonuclease 4 (147 aa).

A signal peptide spans 1–28 (MALQRTHSLLLLLLLTLLGLGLVQPSYG). Gln-29 carries the post-translational modification Pyrrolidone carboxylic acid. DUMP-binding residues include Arg-35, His-40, Lys-68, Asn-71, and Thr-72. His-40 (proton acceptor) is an active-site residue. 4 disulfide bridges follow: Cys-53–Cys-109, Cys-67–Cys-120, Cys-85–Cys-135, and Cys-92–Cys-99. Residue His-144 is the Proton donor of the active site. Phe-145 contacts dUMP.

This sequence belongs to the pancreatic ribonuclease family. As to expression, expressed in the cortical and medullary tubules of the kidney, and in the transitional epithelium of the urinary bladder (at protein level).

Its subcellular location is the secreted. Functionally, cleaves preferentially after uridine bases. Has antimicrobial activity against uropathogenic E.coli (UPEC). Probably contributes to urinary tract sterility. The chain is Ribonuclease 4 (RNASE4) from Homo sapiens (Human).